Consider the following 142-residue polypeptide: Large ribosomal subunit protein uL13 (142 aa).

It belongs to the universal ribosomal protein uL13 family. Part of the 50S ribosomal subunit.

This protein is one of the early assembly proteins of the 50S ribosomal subunit, although it is not seen to bind rRNA by itself. It is important during the early stages of 50S assembly. In Buchnera aphidicola subsp. Cinara cedri (strain Cc), this protein is Large ribosomal subunit protein uL13.